Here is a 348-residue protein sequence, read N- to C-terminus: GTPase Obg (348 aa).

The Obg domain maps to Met1 to Ile159. The 168-residue stretch at Ala160–Asp327 folds into the OBG-type G domain. Residues Gly166 to Ser173, Phe191 to His195, Asp212 to Gly215, Asn279 to Asp282, and Ser308 to Val310 each bind GTP. The Mg(2+) site is built by Ser173 and Thr193.

The protein belongs to the TRAFAC class OBG-HflX-like GTPase superfamily. OBG GTPase family. In terms of assembly, monomer. The cofactor is Mg(2+).

The protein resides in the cytoplasm. In terms of biological role, an essential GTPase which binds GTP, GDP and possibly (p)ppGpp with moderate affinity, with high nucleotide exchange rates and a fairly low GTP hydrolysis rate. Plays a role in control of the cell cycle, stress response, ribosome biogenesis and in those bacteria that undergo differentiation, in morphogenesis control. In Ruegeria sp. (strain TM1040) (Silicibacter sp.), this protein is GTPase Obg.